We begin with the raw amino-acid sequence, 1240 residues long: Cohesin subunit SA-3 (1240 aa).

Residues 1-25 (MPTLWSPSTQHHGSSSGSESSPLQK) show a composition bias toward low complexity. Residues 1 to 108 (MPTLWSPSTQ…VSSGNGKNES (108 aa)) are disordered. Residues 97–108 (RIVSSGNGKNES) are compositionally biased toward polar residues. The SCD domain occupies 324 to 409 (FVHRYRDILP…NRFKDRMVSM (86 aa)). Disordered stretches follow at residues 1077-1154 (AEAS…PELI) and 1213-1240 (DKMLHSPSSPSEHGLDLLDTTELNMEDF). A compositionally biased stretch (polar residues) spans 1115–1125 (GPTTPTLTSTA). Positions 1126-1141 (VKRKQSLRTVGKKQKG) are enriched in basic residues. Serine 1218 carries the phosphoserine modification.

The protein belongs to the SCC3 family. As to quaternary structure, component of the meiosis-specific cohesin complex, which also contains the SMC1 (SMC1A or SMC1B) and SMC3 heterodimer. Such complex likely contains RAD21, or the meiosis-specific related protein REC8. Interacts with CCDC79/TERB1; recruiting cohesin to telomeres to develop structural rigidity. Phosphorylated. As to expression, testis specific.

Its subcellular location is the nucleus. The protein resides in the chromosome. The protein localises to the centromere. Its function is as follows. Meiosis specific component of cohesin complex. The cohesin complex is required for the cohesion of sister chromatids after DNA replication. The cohesin complex apparently forms a large proteinaceous ring within which sister chromatids can be trapped. At anaphase, the complex is cleaved and dissociates from chromatin, allowing sister chromatids to segregate. The meiosis-specific cohesin complex probably replaces mitosis specific cohesin complex when it dissociates from chromatin during prophase I. The protein is Cohesin subunit SA-3 (Stag3) of Mus musculus (Mouse).